Consider the following 277-residue polypeptide: MSLKVLNPVTPSLRGTVMVNRVALWRGKPEKSLVVGRVSSGGRNAHGVITVRHRGGGHKRLHRVVDLKRNKDGVQAVVQRLEYDPNRTAFLALVRYEDGELSYILAPDGLKVSDVVVSGVGSDVLPGNCLQLGSIPAGTFVHNVELRPCGGGIIARAAGSYAQVMGRDGAYVLLRLGSGEVRKILALCRATVGVVSNLNNQNIKLGKAGRNRWLGFRPTVRGVAMNPVDHPHGGGEGKTSGGRNSVTPWGVPTKGKKTRKRGKHSDKYIKVSSVRKR.

A disordered region spans residues 225-277 (MNPVDHPHGGGEGKTSGGRNSVTPWGVPTKGKKTRKRGKHSDKYIKVSSVRKR). A compositionally biased stretch (basic residues) spans 254–264 (KGKKTRKRGKH).

It belongs to the universal ribosomal protein uL2 family. In terms of assembly, part of the 50S ribosomal subunit. Forms a bridge to the 30S subunit in the 70S ribosome.

One of the primary rRNA binding proteins. Required for association of the 30S and 50S subunits to form the 70S ribosome, for tRNA binding and peptide bond formation. It has been suggested to have peptidyltransferase activity; this is somewhat controversial. Makes several contacts with the 16S rRNA in the 70S ribosome. The chain is Large ribosomal subunit protein uL2 from Anaplasma marginale (strain Florida).